Consider the following 436-residue polypeptide: Enolase (436 aa).

Q167 provides a ligand contact to (2R)-2-phosphoglycerate. Residue E209 is the Proton donor of the active site. 3 residues coordinate Mg(2+): D246, E291, and D318. Positions 343, 372, 373, and 394 each coordinate (2R)-2-phosphoglycerate. Catalysis depends on K343, which acts as the Proton acceptor.

Belongs to the enolase family. Component of the RNA degradosome, a multiprotein complex involved in RNA processing and mRNA degradation. It depends on Mg(2+) as a cofactor.

The protein localises to the cytoplasm. Its subcellular location is the secreted. It is found in the cell surface. The catalysed reaction is (2R)-2-phosphoglycerate = phosphoenolpyruvate + H2O. The protein operates within carbohydrate degradation; glycolysis; pyruvate from D-glyceraldehyde 3-phosphate: step 4/5. In terms of biological role, catalyzes the reversible conversion of 2-phosphoglycerate (2-PG) into phosphoenolpyruvate (PEP). It is essential for the degradation of carbohydrates via glycolysis. In Glaesserella parasuis serovar 5 (strain SH0165) (Haemophilus parasuis), this protein is Enolase.